The following is a 327-amino-acid chain: Methionyl-tRNA formyltransferase (327 aa).

Residue 121 to 124 coordinates (6S)-5,6,7,8-tetrahydrofolate; it reads SLLP.

Belongs to the Fmt family.

The enzyme catalyses L-methionyl-tRNA(fMet) + (6R)-10-formyltetrahydrofolate = N-formyl-L-methionyl-tRNA(fMet) + (6S)-5,6,7,8-tetrahydrofolate + H(+). In terms of biological role, attaches a formyl group to the free amino group of methionyl-tRNA(fMet). The formyl group appears to play a dual role in the initiator identity of N-formylmethionyl-tRNA by promoting its recognition by IF2 and preventing the misappropriation of this tRNA by the elongation apparatus. The sequence is that of Methionyl-tRNA formyltransferase from Burkholderia pseudomallei (strain 1710b).